Consider the following 297-residue polypeptide: Putative F-box protein At2g19630 (297 aa).

Residues 11–60 (TKNSLQIPIDLIIEIFLRLSVNSIARCRCVSKQWASTLSRPYFTELFLTR) form the F-box domain.

The protein is Putative F-box protein At2g19630 of Arabidopsis thaliana (Mouse-ear cress).